The sequence spans 357 residues: Cobalt-precorrin-5B C(1)-methyltransferase (357 aa).

Belongs to the CbiD family.

The enzyme catalyses Co-precorrin-5B + S-adenosyl-L-methionine = Co-precorrin-6A + S-adenosyl-L-homocysteine. The protein operates within cofactor biosynthesis; adenosylcobalamin biosynthesis; cob(II)yrinate a,c-diamide from sirohydrochlorin (anaerobic route): step 6/10. In terms of biological role, catalyzes the methylation of C-1 in cobalt-precorrin-5B to form cobalt-precorrin-6A. The chain is Cobalt-precorrin-5B C(1)-methyltransferase from Paramagnetospirillum magneticum (strain ATCC 700264 / AMB-1) (Magnetospirillum magneticum).